The chain runs to 247 residues: Caffeoyl-CoA O-methyltransferase (247 aa).

Residue lysine 21 participates in substrate binding. Residues threonine 63, glutamate 85, 87–88, serine 93, aspartate 111, and alanine 140 contribute to the S-adenosyl-L-methionine site; that span reads GV. Aspartate 163 contributes to the substrate binding site. Residue aspartate 163 participates in a divalent metal cation binding. Aspartate 165 serves as a coordination point for S-adenosyl-L-methionine. Aspartate 189 and asparagine 190 together coordinate a divalent metal cation. Position 194 (asparagine 194) interacts with substrate.

Belongs to the class I-like SAM-binding methyltransferase superfamily. Cation-dependent O-methyltransferase family. CCoAMT subfamily. As to quaternary structure, homodimer. Ca(2+) is required as a cofactor. Requires Mg(2+) as cofactor. The cofactor is Zn(2+).

It carries out the reaction (E)-caffeoyl-CoA + S-adenosyl-L-methionine = (E)-feruloyl-CoA + S-adenosyl-L-homocysteine + H(+). It functions in the pathway aromatic compound metabolism; phenylpropanoid biosynthesis. Functionally, methylates caffeoyl-CoA to feruloyl-CoA and 5-hydroxyferuloyl-CoA to sinapoyl-CoA. Plays a role in the synthesis of feruloylated polysaccharides. Involved in the reinforcement of the plant cell wall. Also involved in the responding to wounding or pathogen challenge by the increased formation of cell wall-bound ferulic acid polymers. In Medicago sativa (Alfalfa), this protein is Caffeoyl-CoA O-methyltransferase (CCOMT).